The following is a 370-amino-acid chain: Polyadenylate-binding protein 4-like (370 aa).

RRM domains lie at 10–88 (ASLY…WSQR), 98–174 (GNVF…RFKN), 190–267 (TNVY…RAQK), and 293–369 (VKLY…LAQR).

The protein belongs to the polyadenylate-binding protein type-1 family.

May bind RNA. The polypeptide is Polyadenylate-binding protein 4-like (PABPC4L) (Homo sapiens (Human)).